Here is a 477-residue protein sequence, read N- to C-terminus: Glutamyl-tRNA(Gln) amidotransferase subunit A (477 aa).

Catalysis depends on charge relay system residues lysine 71 and serine 146. Serine 170 acts as the Acyl-ester intermediate in catalysis.

This sequence belongs to the amidase family. GatA subfamily. In terms of assembly, heterotrimer of A, B and C subunits.

It carries out the reaction L-glutamyl-tRNA(Gln) + L-glutamine + ATP + H2O = L-glutaminyl-tRNA(Gln) + L-glutamate + ADP + phosphate + H(+). In terms of biological role, allows the formation of correctly charged Gln-tRNA(Gln) through the transamidation of misacylated Glu-tRNA(Gln) in organisms which lack glutaminyl-tRNA synthetase. The reaction takes place in the presence of glutamine and ATP through an activated gamma-phospho-Glu-tRNA(Gln). In Halothermothrix orenii (strain H 168 / OCM 544 / DSM 9562), this protein is Glutamyl-tRNA(Gln) amidotransferase subunit A.